Here is a 269-residue protein sequence, read N- to C-terminus: Putative hydro-lyase Atu3911 (269 aa).

The protein belongs to the D-glutamate cyclase family.

This Agrobacterium fabrum (strain C58 / ATCC 33970) (Agrobacterium tumefaciens (strain C58)) protein is Putative hydro-lyase Atu3911.